The sequence spans 788 residues: Ribonucleoside-diphosphate reductase subunit alpha (788 aa).

An ATP-cone domain is found at 2–92; it reads ITVVKRNGRI…LYDLYHKVSG (91 aa). Residues Lys-6, 12 to 18, and Thr-52 each bind ATP; that span reads EPLDITK. A GDP-binding site is contributed by Thr-200. A disulfide bridge links Cys-216 with Cys-497. Residues 223–225 and Arg-253 contribute to the dTTP site; that span reads DNI. Asn-424 lines the GDP pocket. Asn-424 (proton acceptor) is an active-site residue. Catalysis depends on Cys-426, which acts as the Cysteine radical intermediate. GDP contacts are provided by residues Glu-428 and 661–663; that span reads SSI. Catalysis depends on Glu-428, which acts as the Proton acceptor.

This sequence belongs to the ribonucleoside diphosphate reductase large chain family. Tetramer of two alpha and two beta subunits.

It carries out the reaction a 2'-deoxyribonucleoside 5'-diphosphate + [thioredoxin]-disulfide + H2O = a ribonucleoside 5'-diphosphate + [thioredoxin]-dithiol. Under complex allosteric control mediated by deoxynucleoside triphosphates and ATP binding to separate specificity and activation sites on the alpha subunit. The type of nucleotide bound at the specificity site determines substrate preference. It seems probable that ATP makes the enzyme reduce CDP and UDP, dGTP favors ADP reduction and dTTP favors GDP reduction. Stimulated by ATP and inhibited by dATP binding to the activity site. Functionally, provides the precursors necessary for DNA synthesis. Catalyzes the biosynthesis of deoxyribonucleotides from the corresponding ribonucleotides. The protein is Ribonucleoside-diphosphate reductase subunit alpha (nrdA) of Helicobacter pylori (strain ATCC 700392 / 26695) (Campylobacter pylori).